A 642-amino-acid chain; its full sequence is Threonine--tRNA ligase (642 aa).

The TGS domain maps to 1–61 (MPVITLPDGS…ENDAQLSIIT (61 aa)). A catalytic region spans residues 243–534 (DHRKIGKQLD…LTEEFAGFFP (292 aa)). Position 286 is an N6-acetyllysine (Lys-286). Zn(2+)-binding residues include Cys-334, His-385, and His-511.

It belongs to the class-II aminoacyl-tRNA synthetase family. In terms of assembly, homodimer. Zn(2+) is required as a cofactor.

The protein localises to the cytoplasm. The enzyme catalyses tRNA(Thr) + L-threonine + ATP = L-threonyl-tRNA(Thr) + AMP + diphosphate + H(+). Catalyzes the attachment of threonine to tRNA(Thr) in a two-step reaction: L-threonine is first activated by ATP to form Thr-AMP and then transferred to the acceptor end of tRNA(Thr). Also edits incorrectly charged L-seryl-tRNA(Thr). The protein is Threonine--tRNA ligase of Escherichia coli O8 (strain IAI1).